Consider the following 92-residue polypeptide: Small ribosomal subunit protein uS19 (92 aa).

Belongs to the universal ribosomal protein uS19 family.

Functionally, protein S19 forms a complex with S13 that binds strongly to the 16S ribosomal RNA. The polypeptide is Small ribosomal subunit protein uS19 (Aliivibrio salmonicida (strain LFI1238) (Vibrio salmonicida (strain LFI1238))).